Here is a 529-residue protein sequence, read N- to C-terminus: Bifunctional purine biosynthesis protein PurH (529 aa).

The MGS-like domain maps to 1–148 (MQQRRPVRRA…KNHKDVAIVV (148 aa)).

The protein belongs to the PurH family.

It catalyses the reaction (6R)-10-formyltetrahydrofolate + 5-amino-1-(5-phospho-beta-D-ribosyl)imidazole-4-carboxamide = 5-formamido-1-(5-phospho-D-ribosyl)imidazole-4-carboxamide + (6S)-5,6,7,8-tetrahydrofolate. The catalysed reaction is IMP + H2O = 5-formamido-1-(5-phospho-D-ribosyl)imidazole-4-carboxamide. It functions in the pathway purine metabolism; IMP biosynthesis via de novo pathway; 5-formamido-1-(5-phospho-D-ribosyl)imidazole-4-carboxamide from 5-amino-1-(5-phospho-D-ribosyl)imidazole-4-carboxamide (10-formyl THF route): step 1/1. It participates in purine metabolism; IMP biosynthesis via de novo pathway; IMP from 5-formamido-1-(5-phospho-D-ribosyl)imidazole-4-carboxamide: step 1/1. The chain is Bifunctional purine biosynthesis protein PurH from Salmonella dublin (strain CT_02021853).